Here is a 465-residue protein sequence, read N- to C-terminus: FAD-dependent oxidoreductase pigF (465 aa).

The N-terminal stretch at 1-17 is a signal peptide; the sequence is MMLLTLLILSSVGLAAA. N-linked (GlcNAc...) asparagine glycans are attached at residues asparagine 95, asparagine 138, asparagine 260, and asparagine 327. Aspartate 444 is lipidated: GPI-anchor amidated aspartate. Residues 445-465 constitute a propeptide, removed in mature form; the sequence is SASGIWNLTNAVVLPGLLTGL. The N-linked (GlcNAc...) asparagine glycan is linked to asparagine 451.

The protein belongs to the beta-cyclopiazonate dehydrogenase family. FAD serves as cofactor.

It localises to the cell membrane. It functions in the pathway secondary metabolite biosynthesis. In terms of biological role, FAD-dependent oxidoreductase; part of the gene cluster that mediates the biosynthesis of azaphilone pigments (MonAzPs), a complex mixture of compounds with a common azaphilone skeleton very widely used as food colorants. Within the pathway, pigF desaturates C6(7) to afford the orange and red pigments from yellow pigments. The first step of the pathway is performed by the nrPKS pigA that forms the hexaketide precursor from successive condensations of five malonyl-CoA units, with a simple acetyl-CoA starter unit. The role of esterase pigG is not clear, but it may play at most a supplementary role in the formation of the benzaldehyde produced by the pigA nrPKS. This very reactive benzaldehyde is intercepted by the pigC ketoreductase that to provide the first stable enzyme-free MonAzPs intermediate, 6-(4-hydroxy-2-oxopentyl)-3-methyl-2,4-dioxocyclohexane carbaldehyde, also known as M7PKS-1. The FAD-dependent monooxygenase pigN hydroxylates M7PKS-1 at C-4, which triggers the formation of the pyran ring. PigJ, pigK and pigD are involved in the acetylation of the pyran ring. PigJ and pigK form the two subunits of a dedicated fungal FAS that produces the side chain fatty acyl moiety of MonAzPs and pigD transfers the fatty acyl chain to the C-4 alcohol. PigM and pigO are involved in the elimination of the omega-1 alcohol. PigM acts as an O-acetyltransferase that synthesizes the putative O-11 acetyl intermediate whereas pigO eliminates acetic acid to yield an intermediate with a C10(11) double bond. The dehydration of the C-11 alcohol followed by the reduction of the C6(7) double bond by the NAD(P)H-dependent oxidoreductase pigE increases the electrophilicity of the C-5 ketone of the resulting acyl benzopyran. This in turn sets up the C-5 ketone for an intramolecular Knoevenagel aldol condensation with the C-20 enol of the side chain. This condensation affords the characteristic linear tricyclic carbon skeletons of the yellow pigments that serve as the common precursors for the classical yellow pigments monascin and ankaflavin, orange pigments rubopunctatin and monascorubrin, and red pigments ribropunctamine and monascorubramine. The FAD-dependent oxidoreductase pigF is especially invoved in the biosynthesis of orange and red pigments via desaturation of C6(7). This chain is FAD-dependent oxidoreductase pigF, found in Monascus ruber (Mold).